A 233-amino-acid chain; its full sequence is Large ribosomal subunit protein uL1 (233 aa).

Belongs to the universal ribosomal protein uL1 family. In terms of assembly, part of the 50S ribosomal subunit.

Binds directly to 23S rRNA. The L1 stalk is quite mobile in the ribosome, and is involved in E site tRNA release. Functionally, protein L1 is also a translational repressor protein, it controls the translation of the L11 operon by binding to its mRNA. This chain is Large ribosomal subunit protein uL1, found in Trichlorobacter lovleyi (strain ATCC BAA-1151 / DSM 17278 / SZ) (Geobacter lovleyi).